The chain runs to 1223 residues: DNA-directed RNA polymerase subunit beta'' (1223 aa).

The Zn(2+) site is built by C233, C307, C314, and C317.

It belongs to the RNA polymerase beta' chain family. RpoC2 subfamily. As to quaternary structure, in plastids the minimal PEP RNA polymerase catalytic core is composed of four subunits: alpha, beta, beta', and beta''. When a (nuclear-encoded) sigma factor is associated with the core the holoenzyme is formed, which can initiate transcription. The cofactor is Zn(2+).

The protein localises to the plastid. The protein resides in the chloroplast. The enzyme catalyses RNA(n) + a ribonucleoside 5'-triphosphate = RNA(n+1) + diphosphate. Functionally, DNA-dependent RNA polymerase catalyzes the transcription of DNA into RNA using the four ribonucleoside triphosphates as substrates. The sequence is that of DNA-directed RNA polymerase subunit beta'' from Mesostigma viride (Green alga).